The following is a 379-amino-acid chain: Homoserine O-acetyltransferase (379 aa).

The 279-residue stretch at 54-332 (NAILVCHALS…PYQSEEIVKS (279 aa)) folds into the AB hydrolase-1 domain. Serine 159 serves as the catalytic Nucleophile. Arginine 228 contacts substrate. Catalysis depends on residues aspartate 318 and histidine 352. Aspartate 353 contributes to the substrate binding site.

The protein belongs to the AB hydrolase superfamily. MetX family. As to quaternary structure, homodimer.

The protein resides in the cytoplasm. The catalysed reaction is L-homoserine + acetyl-CoA = O-acetyl-L-homoserine + CoA. It functions in the pathway amino-acid biosynthesis; L-methionine biosynthesis via de novo pathway; O-acetyl-L-homoserine from L-homoserine: step 1/1. In terms of biological role, transfers an acetyl group from acetyl-CoA to L-homoserine, forming acetyl-L-homoserine. This Leptospira meyeri protein is Homoserine O-acetyltransferase.